Here is a 268-residue protein sequence, read N- to C-terminus: Interleukin-1 beta (268 aa).

A propeptide spanning residues 1 to 116 is cleaved from the precursor; that stretch reads MATVPELNCE…WDDDDLLVCD (116 aa).

The protein belongs to the IL-1 family. As to quaternary structure, monomer. In its precursor form, weakly interacts with full-length MEFV; the mature cytokine does not interact at all. Interacts with integrins ITGAV:ITGBV and ITGA5:ITGB1; integrin-binding is required for IL1B signaling. Interacts with cargo receptor TMED10; the interaction is direct and is required for the secretion of IL1B mature form. Interacts with HSP90AB1; the interaction facilitates cargo translocation into the ERGIC. Interacts with HSP90B1; the interaction facilitates cargo translocation into the ERGIC.

Its subcellular location is the cytoplasm. It localises to the cytosol. The protein resides in the secreted. It is found in the lysosome. The protein localises to the extracellular exosome. Functionally, potent pro-inflammatory cytokine. Initially discovered as the major endogenous pyrogen, induces prostaglandin synthesis, neutrophil influx and activation, T-cell activation and cytokine production, B-cell activation and antibody production, and fibroblast proliferation and collagen production. Promotes Th17 differentiation of T-cells. Synergizes with IL12/interleukin-12 to induce IFNG synthesis from T-helper 1 (Th1) cells. Plays a role in angiogenesis by inducing VEGF production synergistically with TNF and IL6. Involved in transduction of inflammation downstream of pyroptosis: its mature form is specifically released in the extracellular milieu by passing through the gasdermin-D (GSDMD) pore. The chain is Interleukin-1 beta from Rattus norvegicus (Rat).